The primary structure comprises 230 residues: MSKAVVVFSGGQDSTTCLVQALSQFDEVHAITFDYGQRHSEEIEVAKALTSELGCASHKIMDVSLLGELAISALTRDAIPVSHELMDNGLPNTFVPGRNILFLTLAGIYAYQLGADTVITGVCETDFSGYPDCRNDFIKAMEQALNLGMDKQLNIHTPLMWLNKAETWALADRYGKLELVRNHTLTCYNGIRGDGCGDCPACHLRKRGLEDYLSNRDAVNAELTKKTGAN.

8–18 contacts ATP; it reads FSGGQDSTTCL. The Zn(2+) site is built by Cys-187, Cys-196, Cys-199, and Cys-202.

It belongs to the QueC family. Requires Zn(2+) as cofactor.

The catalysed reaction is 7-carboxy-7-deazaguanine + NH4(+) + ATP = 7-cyano-7-deazaguanine + ADP + phosphate + H2O + H(+). It functions in the pathway purine metabolism; 7-cyano-7-deazaguanine biosynthesis. Catalyzes the ATP-dependent conversion of 7-carboxy-7-deazaguanine (CDG) to 7-cyano-7-deazaguanine (preQ(0)). This chain is 7-cyano-7-deazaguanine synthase, found in Shewanella amazonensis (strain ATCC BAA-1098 / SB2B).